The sequence spans 431 residues: Probable indole-3-pyruvate monooxygenase YUCCA7 (431 aa).

36–41 contributes to the FAD binding site; sequence GAGPSG. 207 to 212 contributes to the NADP(+) binding site; that stretch reads GCGNSG.

Belongs to the FMO family. FAD is required as a cofactor. Expressed in shoot apex regions and siliques, and at high levels in roots. Detected in flowers, stems and leaves.

It carries out the reaction indole-3-pyruvate + NADPH + O2 + H(+) = (indol-3-yl)acetate + CO2 + NADP(+) + H2O. It functions in the pathway plant hormone metabolism; auxin biosynthesis. In terms of biological role, involved in auxin biosynthesis. Belongs to the set of redundant YUCCA genes probably responsible for auxin biosynthesis in roots. This is Probable indole-3-pyruvate monooxygenase YUCCA7 (YUC7) from Arabidopsis thaliana (Mouse-ear cress).